The sequence spans 1058 residues: Bromodomain-containing protein 1 (1058 aa).

Over residues Met1–Ala12 the composition is skewed to basic residues. The tract at residues Met1–Pro26 is disordered. Residues Leu31–Ser80 are interaction with KAT7/HBO1 and histones. The tract at residues His92–Ala116 is disordered. Residue Ser128 is modified to Phosphoserine. The segment at Asp214 to Ser264 adopts a PHD-type 1 zinc-finger fold. The C2HC pre-PHD-type zinc-finger motif lies at Pro268–Val301. The segment at Leu325–Thr389 adopts a PHD-type 2 zinc-finger fold. An N6-acetyllysine mark is found at Lys368, Lys516, and Lys519. Glycyl lysine isopeptide (Lys-Gly) (interchain with G-Cter in SUMO2) cross-links involve residues Lys554 and Lys594. Residues Leu562–Ala666 form the Bromo domain. Disordered stretches follow at residues Leu755–Gly776 and Leu791–Phe868. Ser803 is subject to Phosphoserine. Residues Ser852–Ser867 show a composition bias toward low complexity. Residue Lys903 is modified to N6-acetyllysine. The residue at position 906 (Arg906) is a Phosphoserine. The PWWP domain occupies Pro929 to Asp1012. Phosphoserine is present on residues Ser1052 and Ser1055.

As to quaternary structure, component of some HBO1 complex composed of KAT7/HBO1, MEAF6, ING4 and BRD1/BRPF2. Component of the MOZ/MORF complex composed at least of ING5, KAT6A, KAT6B, MEAF6 and one of BRPF1, BRD1/BRPF2 and BRPF3. Interacts (via PHD-type zinc finger domain) with unmodified histone H3. Interacts (via PWWP domain) with dimethylated and trimethylated 'Lys-79' on histone H3. In terms of tissue distribution, highly expressed in testis.

The protein resides in the nucleus. It localises to the chromosome. In terms of biological role, scaffold subunit of various histone acetyltransferase (HAT) complexes, such as the MOZ/MORF and HBO1 complexes, that acts as a regulator of hematopoiesis. Plays a key role in HBO1 complex by directing KAT7/HBO1 specificity towards histone H3 'Lys-14' acetylation (H3K14ac), thereby promoting erythroid differentiation. This is Bromodomain-containing protein 1 from Homo sapiens (Human).